The primary structure comprises 655 residues: MQAARIAPSLGRQLLRFGGGSSRPTALLGQPWPGPARRPYAGGAAQLALDKSDSHLSDALNKAKPAKAESKSFAVAMFKGQLTTDQVFPYPSVLNQEQTEFLKELVEPVSRFFEEVNDPAKNDTLEMVEETTLQGLKELGAFGLQVPSELGGVGLCNTQYARLVEIVGMHDLAVGITLGAHQSIGFKGILLFGTKAQKEKYLPKLASGETLAAFCLTEPSSGSDAASIRTSAVPSPCGKYYTLNGSKLWISNGGLADIFTVFAKTPVTDPATGAVKEKITAFVVERGFGGVTHGPPEKKMGIKASNTAEVLFDGVRVPSENVLGEVGSGFKVAMHILNNGRFGMAAALAGTMRGIITKAVDYATNRIQFGEKIHNFGLIQEKLARMVMLQYVTESMAYMVSANMDQGSTDFQIEAAISKIFGSEAAWKVTDECIQIMGGMGFMKEPGVERVLRDLRIFRIFEGTNDILRLFVALQGCMDKGKELSGLGSALKNPFGNAGLLLGEAGKQLRRRAGLGSGLSLSGIVHPELSRSGELAVQALEQFATVVEAKLIKHKKGIVNEQFLLQRLADGAIDLYAMVVVLSRASRSLSEGHHTAQHEKMLCDTWCIEAAARIREGMAALQSDPRQHELYRNFKSISKALVERGGVVTNNPLGF.

Residues 1–40 (MQAARIAPSLGRQLLRFGGGSSRPTALLGQPWPGPARRPY) constitute a mitochondrion transit peptide. The segment at 41-482 (AGGAAQLALD…ALQGCMDKGK (442 aa)) is catalytic. The residue at position 51 (Lys51) is an N6-acetyllysine. Lys71 carries the N6-acetyllysine; alternate modification. Lys71 is modified (N6-succinyllysine; alternate). Lys195 is modified (N6-succinyllysine). Residue 214–223 (FCLTEPSSGS) coordinates FAD. Cys237 is modified (S-nitrosocysteine). Residue Lys239 is modified to N6-acetyllysine; alternate. Lys239 bears the N6-succinyllysine; alternate mark. Residue 249–251 (WIS) participates in FAD binding. An N6-acetyllysine; alternate mark is found at Lys276 and Lys278. N6-succinyllysine; alternate occurs at positions 276 and 278. Lys298 carries the N6-acetyllysine modification. Lys331 carries the post-translational modification N6-acetyllysine; alternate. Lys331 carries the post-translational modification N6-succinyllysine; alternate. Lys372 is subject to N6-succinyllysine. 461–463 (FEG) serves as a coordination point for substrate. Glu462 functions as the Proton acceptor in the catalytic mechanism. 464-466 (TND) is a binding site for FAD. The residue at position 482 (Lys482) is an N6-acetyllysine; alternate. At Lys482 the chain carries N6-succinyllysine; alternate. The segment at 483-516 (ELSGLGSALKNPFGNAGLLLGEAGKQLRRRAGLG) is membrane-anchoring. Residues Ser517 and Ser522 each carry the phosphoserine modification. At Lys550 the chain carries N6-acetyllysine. At Lys556 the chain carries N6-acetyllysine; alternate. Lys556 bears the N6-succinyllysine; alternate mark. Gln562 contacts FAD. Residue Lys639 is modified to N6-succinyllysine.

The protein belongs to the acyl-CoA dehydrogenase family. In terms of assembly, homodimer. Homodimerizes after import into the mitochondrion. The cofactor is FAD. S-nitrosylation at Cys-237 in liver improves catalytic efficiency.

The protein localises to the mitochondrion inner membrane. It catalyses the reaction a very-long-chain 2,3-saturated fatty acyl-CoA + oxidized [electron-transfer flavoprotein] + H(+) = a very-long-chain (2E)-enoyl-CoA + reduced [electron-transfer flavoprotein]. It carries out the reaction dodecanoyl-CoA + oxidized [electron-transfer flavoprotein] + H(+) = (2E)-dodecenoyl-CoA + reduced [electron-transfer flavoprotein]. The catalysed reaction is tetradecanoyl-CoA + oxidized [electron-transfer flavoprotein] + H(+) = (2E)-tetradecenoyl-CoA + reduced [electron-transfer flavoprotein]. The enzyme catalyses oxidized [electron-transfer flavoprotein] + hexadecanoyl-CoA + H(+) = (2E)-hexadecenoyl-CoA + reduced [electron-transfer flavoprotein]. It catalyses the reaction octadecanoyl-CoA + oxidized [electron-transfer flavoprotein] + H(+) = (2E)-octadecenoyl-CoA + reduced [electron-transfer flavoprotein]. It carries out the reaction eicosanoyl-CoA + oxidized [electron-transfer flavoprotein] + H(+) = (2E)-eicosenoyl-CoA + reduced [electron-transfer flavoprotein]. The catalysed reaction is docosanoyl-CoA + oxidized [electron-transfer flavoprotein] + H(+) = (2E)-docosenoyl-CoA + reduced [electron-transfer flavoprotein]. The enzyme catalyses tetracosanoyl-CoA + oxidized [electron-transfer flavoprotein] + H(+) = (2E)-tetracosenoyl-CoA + reduced [electron-transfer flavoprotein]. The protein operates within lipid metabolism; mitochondrial fatty acid beta-oxidation. Very long-chain specific acyl-CoA dehydrogenase is one of the acyl-CoA dehydrogenases that catalyze the first step of mitochondrial fatty acid beta-oxidation, an aerobic process breaking down fatty acids into acetyl-CoA and allowing the production of energy from fats. The first step of fatty acid beta-oxidation consists in the removal of one hydrogen from C-2 and C-3 of the straight-chain fatty acyl-CoA thioester, resulting in the formation of trans-2-enoyl-CoA. Among the different mitochondrial acyl-CoA dehydrogenases, very long-chain specific acyl-CoA dehydrogenase acts specifically on acyl-CoAs with saturated 12 to 24 carbons long primary chains. This Macaca fascicularis (Crab-eating macaque) protein is Very long-chain specific acyl-CoA dehydrogenase, mitochondrial.